Here is a 1226-residue protein sequence, read N- to C-terminus: Receptor-type tyrosine-protein phosphatase O (1226 aa).

Residues Met-1–Thr-29 form the signal peptide. One can recognise a Fibronectin type-III 1 domain in the interval Phe-30–Leu-115. The Extracellular portion of the chain corresponds to Phe-30 to Val-832. N-linked (GlcNAc...) asparagine glycans are attached at residues Asn-75, Asn-154, and Asn-227. A disordered region spans residues Glu-242–Ser-305. Positions Ile-260 to Glu-270 are enriched in basic and acidic residues. Low complexity predominate over residues Pro-277–Ser-291. A glycan (N-linked (GlcNAc...) asparagine) is linked at Asn-279. A compositionally biased stretch (polar residues) spans Pro-296–Ser-305. Fibronectin type-III domains are found at residues Arg-339 to Thr-435, Lys-445 to Thr-541, Gly-542 to Phe-638, Ala-641 to Ala-734, and Pro-735 to Asn-827. N-linked (GlcNAc...) asparagine glycans are attached at residues Asn-471 and Asn-500. 3 N-linked (GlcNAc...) asparagine glycosylation sites follow: Asn-710, Asn-743, and Asn-800. The helical transmembrane segment at Ile-833–Ile-853 threads the bilayer. Topologically, residues Leu-854–Ser-1226 are cytoplasmic. Residue Ser-875 is modified to Phosphoserine. The 258-residue stretch at Phe-948–Met-1205 folds into the Tyrosine-protein phosphatase domain. Substrate contacts are provided by residues Asp-1112, Cys-1146–Arg-1152, and Gln-1190. Cys-1146 functions as the Phosphocysteine intermediate in the catalytic mechanism. Tyr-1220 is subject to Phosphotyrosine.

It belongs to the protein-tyrosine phosphatase family. Receptor class 3 subfamily. Interacts (phosphorylated form) with FYN and GRB2.

The protein resides in the membrane. The catalysed reaction is O-phospho-L-tyrosyl-[protein] + H2O = L-tyrosyl-[protein] + phosphate. Its function is as follows. Possesses tyrosine phosphatase activity. Plays a role in regulating the glomerular pressure/filtration rate relationship through an effect on podocyte structure and function. This Mus musculus (Mouse) protein is Receptor-type tyrosine-protein phosphatase O (Ptpro).